The sequence spans 165 residues: Crossover junction endodeoxyribonuclease RuvC (165 aa).

Catalysis depends on residues D7, E67, and D140. Residues D7, E67, and D140 each contribute to the Mg(2+) site.

The protein belongs to the RuvC family. As to quaternary structure, homodimer which binds Holliday junction (HJ) DNA. The HJ becomes 2-fold symmetrical on binding to RuvC with unstacked arms; it has a different conformation from HJ DNA in complex with RuvA. In the full resolvosome a probable DNA-RuvA(4)-RuvB(12)-RuvC(2) complex forms which resolves the HJ. Requires Mg(2+) as cofactor.

The protein resides in the cytoplasm. The catalysed reaction is Endonucleolytic cleavage at a junction such as a reciprocal single-stranded crossover between two homologous DNA duplexes (Holliday junction).. Its function is as follows. The RuvA-RuvB-RuvC complex processes Holliday junction (HJ) DNA during genetic recombination and DNA repair. Endonuclease that resolves HJ intermediates. Cleaves cruciform DNA by making single-stranded nicks across the HJ at symmetrical positions within the homologous arms, yielding a 5'-phosphate and a 3'-hydroxyl group; requires a central core of homology in the junction. The consensus cleavage sequence is 5'-(A/T)TT(C/G)-3'. Cleavage occurs on the 3'-side of the TT dinucleotide at the point of strand exchange. HJ branch migration catalyzed by RuvA-RuvB allows RuvC to scan DNA until it finds its consensus sequence, where it cleaves and resolves the cruciform DNA. This is Crossover junction endodeoxyribonuclease RuvC from Dehalococcoides mccartyi (strain ATCC BAA-2266 / KCTC 15142 / 195) (Dehalococcoides ethenogenes (strain 195)).